The sequence spans 434 residues: GTPase Obg (434 aa).

Residues 1 to 158 (MFLDTAKIKV…RELQLELKIL (158 aa)) enclose the Obg domain. Residues 159–336 (ADVGLVGFPS…LLDATAELLD (178 aa)) form the OBG-type G domain. GTP contacts are provided by residues 165 to 172 (GFPSVGKS), 190 to 194 (FTTIV), 212 to 215 (DLPG), 282 to 285 (NKMD), and 317 to 319 (SGL). Mg(2+) is bound by residues Ser-172 and Thr-192. Positions 356-434 (GFDEEEKAFE…IGKFEFEFVD (79 aa)) constitute an OCT domain.

Belongs to the TRAFAC class OBG-HflX-like GTPase superfamily. OBG GTPase family. Monomer. It depends on Mg(2+) as a cofactor.

It is found in the cytoplasm. Functionally, an essential GTPase which binds GTP, GDP and possibly (p)ppGpp with moderate affinity, with high nucleotide exchange rates and a fairly low GTP hydrolysis rate. Plays a role in control of the cell cycle, stress response, ribosome biogenesis and in those bacteria that undergo differentiation, in morphogenesis control. This chain is GTPase Obg, found in Streptococcus pneumoniae serotype 19F (strain G54).